The primary structure comprises 358 residues: C-X-C chemokine receptor type 4-A (358 aa).

The interval 1-25 (MDGFSGGIDINIFDGNSTENGSGDF) is important for chemokine binding and signaling. At 1–44 (MDGFSGGIDINIFDGNSTENGSGDFEDFIEPCFMHENSDFNRIF) the chain is on the extracellular side. N-linked (GlcNAc...) asparagine glycosylation is found at Asn16 and Asn20. 2 disulfides stabilise this stretch: Cys32–Cys281 and Cys113–Cys190. Residues 45 to 67 (LPTIYSFIFLLGIIGNGLVVVVM) form a helical membrane-spanning segment. The Cytoplasmic portion of the chain corresponds to 68–81 (GYQKKSRTMTDKYR). A helical transmembrane segment spans residues 82 to 103 (LHLSVADLLFVFTLPFWSVDAA). The segment at 98-101 (WSVD) is chemokine binding. Topologically, residues 104-114 (IGWYFKEFLCK) are extracellular. Residues 115–134 (AVHVIYTVNLYSSVLILAFI) traverse the membrane as a helical segment. Positions 117 to 121 (HVIYT) are chemokine binding. Residues 135-158 (SLDRYLAIVHATNSQGSRKMLADK) lie on the Cytoplasmic side of the membrane. Residues 139–151 (YLAIVHATNSQGS) are involved in dimerization; when bound to chemokine. Residues 159-178 (VVYAGVWLPALLLTVPDLVF) form a helical membrane-spanning segment. The Extracellular portion of the chain corresponds to 179–202 (ARVSDENGQFVCDRIYPIENRETW). The tract at residues 190–194 (CDRIY) is chemokine binding, important for signaling. A helical membrane pass occupies residues 203 to 223 (TVGFRFLHITVGLILPGLIIL). The Cytoplasmic segment spans residues 224 to 248 (ICYCVIISKLSHSKGHQKRKALKTT). The chain crosses the membrane as a helical span at residues 249 to 268 (VILILAFFACWLPYYVCLTT). Residues 269-289 (DTFMLLGLVKGDCIWENTLHM) are Extracellular-facing. A helical membrane pass occupies residues 290 to 309 (AISITEALAFFHCCLNPILY). The Cytoplasmic portion of the chain corresponds to 310 to 358 (AFLGAKFKTSAQNAFTSVSRGSSLKILSKKRAGLSSVSTESESSSFHSS). Positions 338–358 (KKRAGLSSVSTESESSSFHSS) are disordered. The span at 344-358 (SSVSTESESSSFHSS) shows a compositional bias: low complexity.

This sequence belongs to the G-protein coupled receptor 1 family. In terms of assembly, monomer. Can form dimers. Post-translationally, sulfation is required for efficient binding of cxcl12/sdf-1alpha and promotes its dimerization. In terms of processing, O- and N-glycosylated. Highly expressed in the embryonic nervous system including forebrain, hindbrain and sensory organs (including eye), and in neural crest cells. Also expressed in the dorsal lateral plate, the first site of definitive hematopoiesis in the embryo. Appears in migrating presumptive primordial germ cells (pPGCs) from stage 24. Expressed in the epidermis at stage 40. In the adult, highly expressed in the spleen with lower levels of expression in the liver and very low levels in kidney, heart, skin and brain.

The protein resides in the cell membrane. Its subcellular location is the cytoplasm. It localises to the nucleus. It is found in the early endosome. The protein localises to the late endosome. The protein resides in the lysosome. Its function is as follows. Receptor for the C-X-C chemokine cxcl12/sdf-1. Transduces a signal by increasing the intracellular level of calcium ions. Signaling with cxcl12/sdf-1 mediates the directional movement of mesodermal cells during gastrulation. May play a role in the migration of embryonic presumptive primordial germ cells (pPGCs). May also be involved in regulating the migration of hematopoietic stem cells into the larval liver. This chain is C-X-C chemokine receptor type 4-A (cxcr4-a), found in Xenopus laevis (African clawed frog).